The following is a 297-amino-acid chain: Formylmethanofuran--tetrahydromethanopterin formyltransferase-like protein (297 aa).

Belongs to the FTR family.

This chain is Formylmethanofuran--tetrahydromethanopterin formyltransferase-like protein (ehaS), found in Methanothermobacter thermautotrophicus (strain ATCC 29096 / DSM 1053 / JCM 10044 / NBRC 100330 / Delta H) (Methanobacterium thermoautotrophicum).